We begin with the raw amino-acid sequence, 212 residues long: Deoxyribose-phosphate aldolase (212 aa).

Catalysis depends on D89, which acts as the Proton donor/acceptor. Residue K151 is the Schiff-base intermediate with acetaldehyde of the active site. K180 functions as the Proton donor/acceptor in the catalytic mechanism.

The protein belongs to the DeoC/FbaB aldolase family. DeoC type 1 subfamily.

It is found in the cytoplasm. The catalysed reaction is 2-deoxy-D-ribose 5-phosphate = D-glyceraldehyde 3-phosphate + acetaldehyde. It participates in carbohydrate degradation; 2-deoxy-D-ribose 1-phosphate degradation; D-glyceraldehyde 3-phosphate and acetaldehyde from 2-deoxy-alpha-D-ribose 1-phosphate: step 2/2. Catalyzes a reversible aldol reaction between acetaldehyde and D-glyceraldehyde 3-phosphate to generate 2-deoxy-D-ribose 5-phosphate. The protein is Deoxyribose-phosphate aldolase of Clostridium botulinum (strain Kyoto / Type A2).